A 104-amino-acid chain; its full sequence is Protein S100-A14 (104 aa).

Residues 27–61 (KNFHQYSVEGGKETLTPSELRDLVTQQLPHLMPSN) enclose the EF-hand domain.

This sequence belongs to the S-100 family. As to quaternary structure, homodimer. Interacts with AGER. In terms of tissue distribution, expressed at highest levels in colon and at moderate levels in thymus, kidney, liver, small intestine, and lung. Low expression in heart and no expression is seen in brain, skeletal muscle, spleen, placenta and peripheral blood leukocytes.

The protein resides in the cytoplasm. Its function is as follows. Modulates P53/TP53 protein levels, and thereby plays a role in the regulation of cell survival and apoptosis. Depending on the context, it can promote cell proliferation or apoptosis. Plays a role in the regulation of cell migration by modulating the levels of MMP2, a matrix protease that is under transcriptional control of P53/TP53. Does not bind calcium. In Homo sapiens (Human), this protein is Protein S100-A14 (S100A14).